Consider the following 337-residue polypeptide: Cobalt-precorrin-5B C(1)-methyltransferase (337 aa).

The protein belongs to the CbiD family.

It carries out the reaction Co-precorrin-5B + S-adenosyl-L-methionine = Co-precorrin-6A + S-adenosyl-L-homocysteine. It functions in the pathway cofactor biosynthesis; adenosylcobalamin biosynthesis; cob(II)yrinate a,c-diamide from sirohydrochlorin (anaerobic route): step 6/10. Its function is as follows. Catalyzes the methylation of C-1 in cobalt-precorrin-5B to form cobalt-precorrin-6A. This Methanoculleus marisnigri (strain ATCC 35101 / DSM 1498 / JR1) protein is Cobalt-precorrin-5B C(1)-methyltransferase.